The chain runs to 156 residues: Small ribosomal subunit protein uS7 (156 aa).

Belongs to the universal ribosomal protein uS7 family. In terms of assembly, part of the 30S ribosomal subunit. Contacts proteins S9 and S11.

In terms of biological role, one of the primary rRNA binding proteins, it binds directly to 16S rRNA where it nucleates assembly of the head domain of the 30S subunit. Is located at the subunit interface close to the decoding center, probably blocks exit of the E-site tRNA. The chain is Small ribosomal subunit protein uS7 from Treponema pallidum (strain Nichols).